Here is a 303-residue protein sequence, read N- to C-terminus: ATP synthase gamma chain (303 aa).

The protein belongs to the ATPase gamma chain family. F-type ATPases have 2 components, CF(1) - the catalytic core - and CF(0) - the membrane proton channel. CF(1) has five subunits: alpha(3), beta(3), gamma(1), delta(1), epsilon(1). CF(0) has three main subunits: a, b and c.

It localises to the cell inner membrane. Its function is as follows. Produces ATP from ADP in the presence of a proton gradient across the membrane. The gamma chain is believed to be important in regulating ATPase activity and the flow of protons through the CF(0) complex. The sequence is that of ATP synthase gamma chain from Elusimicrobium minutum (strain Pei191).